The primary structure comprises 167 residues: CKLF-like MARVEL transmembrane domain-containing protein 7 (167 aa).

The MARVEL domain occupies 32–158; it reads YPLTHGALFK…SLWLSYKITC (127 aa). 4 consecutive transmembrane segments (helical) span residues 35–55, 69–89, 102–122, and 132–152; these read THGALFKVAQMVTLLIAFICV, FEVVTMCDLIMILIFYLVHLF, LSELLHYLIGTLLLLIASIVI, and LVAGAIFGFLASFLCLASLWL.

The protein belongs to the chemokine-like factor family.

It localises to the membrane. The polypeptide is CKLF-like MARVEL transmembrane domain-containing protein 7 (Cmtm7) (Mus musculus (Mouse)).